The sequence spans 115 residues: Nucleoid-associated protein Npun_F0448 (115 aa).

The protein belongs to the YbaB/EbfC family. Homodimer.

The protein localises to the cytoplasm. Its subcellular location is the nucleoid. Functionally, binds to DNA and alters its conformation. May be involved in regulation of gene expression, nucleoid organization and DNA protection. The protein is Nucleoid-associated protein Npun_F0448 of Nostoc punctiforme (strain ATCC 29133 / PCC 73102).